We begin with the raw amino-acid sequence, 901 residues long: Protein translocase subunit SecA (901 aa).

ATP is bound by residues Gln85, 103–107, and Asp492; that span reads GEGKT. Positions 828–901 are disordered; it reads GLVTDDGGNP…PKNRRNKKRR (74 aa). Basic and acidic residues predominate over residues 871-881; the sequence is DGQKPRGEGNR. Basic residues predominate over residues 882 to 901; that stretch reads AARRSAASKKPKNRRNKKRR.

The protein belongs to the SecA family. As to quaternary structure, monomer and homodimer. Part of the essential Sec protein translocation apparatus which comprises SecA, SecYEG and auxiliary proteins SecDF. Other proteins may also be involved.

It is found in the cell membrane. The protein resides in the cytoplasm. The catalysed reaction is ATP + H2O + cellular proteinSide 1 = ADP + phosphate + cellular proteinSide 2.. Functionally, part of the Sec protein translocase complex. Interacts with the SecYEG preprotein conducting channel. Has a central role in coupling the hydrolysis of ATP to the transfer of proteins into and across the cell membrane, serving as an ATP-driven molecular motor driving the stepwise translocation of polypeptide chains across the membrane. The sequence is that of Protein translocase subunit SecA from Cutibacterium acnes (strain DSM 16379 / KPA171202) (Propionibacterium acnes).